A 331-amino-acid polypeptide reads, in one-letter code: MSNEQEDFGSLFNNQGELGIMDDFAEFGFQTTTTPTNWAAAGNYMYPDQVHLPASINNPNMPINDWLEDAPMPDCYNVPSTSTDENNDPFPFSNISSQSSLKPKTPEKAVVEVRPTGNEMLDPEPKYPKEEKPWCTIFYYELTVRLGKAFEAKVPTITIDGATGASDECRMSLTSQPSSRNSKSSQIRNTVGAGIQLAYENGELWLTVLTDQIVFVQCPFLNQTLNKPLKYVFRLQNKGDQKRMKIFDKEQFEQEKTLALGPLTEKEVADERMRIFSNIRVSFCKGFGETYSRLKVVNLPCWIEIILHEPADEYDTVFRINNERPEIGSRS.

The region spanning 134-331 is the MH2 domain; sequence WCTIFYYELT…NERPEIGSRS (198 aa). Residues 168 to 187 form a disordered region; it reads ECRMSLTSQPSSRNSKSSQI. The span at 175 to 185 shows a compositional bias: low complexity; the sequence is SQPSSRNSKSS.

As to quaternary structure, interacts with R-SMAD daf-8 and co-SMAD daf-3. Interacts with daf-3 in a daf-8 dependent manner.

Functionally, probably an atypical receptor-regulated SMAD (R-SMAD) that is an intracellular signal transducer and transcriptional modulator activated by TGF-beta-like daf-7 signaling. Plays a role in TGF-beta-like daf-7 signaling in regulating entry into a developmentally arrested larval state known as dauer, in response to harsh environmental conditions; partially redundant with R-SMAD daf-8. This chain is Smad-related protein daf-14, found in Caenorhabditis elegans.